The chain runs to 526 residues: Cytochrome P450 4e2 (526 aa).

Heme-binding residues include Glu-307 and Cys-444.

This sequence belongs to the cytochrome P450 family. Requires heme as cofactor.

The protein localises to the endoplasmic reticulum membrane. It is found in the microsome membrane. Its function is as follows. May be involved in the metabolism of insect hormones and in the breakdown of synthetic insecticides. The protein is Cytochrome P450 4e2 (Cyp4e2) of Drosophila melanogaster (Fruit fly).